Here is a 510-residue protein sequence, read N- to C-terminus: Ninja-family protein mc410 (510 aa).

Disordered regions lie at residues 1-179, 323-414, and 481-510; these read MDEN…RQIL, HPSH…PSEF, and RHAS…SAQS. Basic and acidic residues-rich tracts occupy residues 31 to 44 and 103 to 146; these read SKVE…KVIN and RPVE…DKTR. Residues 148–160 show a composition bias toward polar residues; that stretch reads SHISITTDEGSTA. Composition is skewed to basic and acidic residues over residues 363–389 and 397–406; these read RAME…EENV and RAKDPPDQPR. A compositionally biased stretch (polar residues) spans 485–496; it reads VEQTSQEPGTGV. Residues 497-510 show a composition bias toward low complexity; sequence SSFPSSNPAASAQS.

The protein belongs to the Ninja family.

Its subcellular location is the nucleus. The sequence is that of Ninja-family protein mc410 (MC410) from Nicotiana tabacum (Common tobacco).